The following is a 353-amino-acid chain: Photosystem II protein D1 (353 aa).

Thr2 carries the N-acetylthreonine modification. Phosphothreonine is present on Thr2. The next 3 membrane-spanning stretches (helical) occupy residues 29 to 46, 118 to 133, and 142 to 156; these read YVGW…TAVS, HFFL…EWEL, and WIAV…AATA. His118 serves as a coordination point for chlorophyll a. Residue Tyr126 coordinates pheophytin a. Positions 170 and 189 each coordinate [CaMn4O5] cluster. The helical transmembrane segment at 197–218 threads the bilayer; it reads FHMLGVAGVFGGSLFSAMHGSL. His198 is a binding site for chlorophyll a. Residues His215 and 264 to 265 each bind a quinone; that span reads SF. Fe cation is bound at residue His215. His272 is a binding site for Fe cation. Residues 274–288 traverse the membrane as a helical segment; it reads FLAAWPVVGIWFTAL. [CaMn4O5] cluster contacts are provided by His332, Glu333, Asp342, and Ala344. Residues 345–353 constitute a propeptide that is removed on maturation; that stretch reads SVEAPSING.

This sequence belongs to the reaction center PufL/M/PsbA/D family. In terms of assembly, PSII is composed of 1 copy each of membrane proteins PsbA, PsbB, PsbC, PsbD, PsbE, PsbF, PsbH, PsbI, PsbJ, PsbK, PsbL, PsbM, PsbT, PsbX, PsbY, PsbZ, Psb30/Ycf12, at least 3 peripheral proteins of the oxygen-evolving complex and a large number of cofactors. It forms dimeric complexes. The D1/D2 heterodimer binds P680, chlorophylls that are the primary electron donor of PSII, and subsequent electron acceptors. It shares a non-heme iron and each subunit binds pheophytin, quinone, additional chlorophylls, carotenoids and lipids. D1 provides most of the ligands for the Mn4-Ca-O5 cluster of the oxygen-evolving complex (OEC). There is also a Cl(-1) ion associated with D1 and D2, which is required for oxygen evolution. The PSII complex binds additional chlorophylls, carotenoids and specific lipids. serves as cofactor. Post-translationally, tyr-161 forms a radical intermediate that is referred to as redox-active TyrZ, YZ or Y-Z. In terms of processing, C-terminally processed by CTPA; processing is essential to allow assembly of the oxygen-evolving complex and thus photosynthetic growth.

Its subcellular location is the plastid. It localises to the chloroplast thylakoid membrane. It carries out the reaction 2 a plastoquinone + 4 hnu + 2 H2O = 2 a plastoquinol + O2. Its function is as follows. Photosystem II (PSII) is a light-driven water:plastoquinone oxidoreductase that uses light energy to abstract electrons from H(2)O, generating O(2) and a proton gradient subsequently used for ATP formation. It consists of a core antenna complex that captures photons, and an electron transfer chain that converts photonic excitation into a charge separation. The D1/D2 (PsbA/PsbD) reaction center heterodimer binds P680, the primary electron donor of PSII as well as several subsequent electron acceptors. In Tupiella akineta (Green alga), this protein is Photosystem II protein D1.